A 508-amino-acid chain; its full sequence is Ribonuclease Y (508 aa).

The chain crosses the membrane as a helical span at residues isoleucine 2–isoleucine 22. The KH domain occupies threonine 198 to leucine 261. The HD domain occupies valine 324–alanine 417.

The protein belongs to the RNase Y family.

It localises to the cell membrane. Functionally, endoribonuclease that initiates mRNA decay. The sequence is that of Ribonuclease Y from Thermoanaerobacter pseudethanolicus (strain ATCC 33223 / 39E) (Clostridium thermohydrosulfuricum).